We begin with the raw amino-acid sequence, 140 residues long: Nucleoside diphosphate kinase (140 aa).

Positions 11, 59, 87, 93, 104, and 114 each coordinate ATP. His117 (pros-phosphohistidine intermediate) is an active-site residue.

It belongs to the NDK family. Homotetramer. The cofactor is Mg(2+).

The protein localises to the cytoplasm. The catalysed reaction is a 2'-deoxyribonucleoside 5'-diphosphate + ATP = a 2'-deoxyribonucleoside 5'-triphosphate + ADP. The enzyme catalyses a ribonucleoside 5'-diphosphate + ATP = a ribonucleoside 5'-triphosphate + ADP. In terms of biological role, major role in the synthesis of nucleoside triphosphates other than ATP. The ATP gamma phosphate is transferred to the NDP beta phosphate via a ping-pong mechanism, using a phosphorylated active-site intermediate. In Azorhizobium caulinodans (strain ATCC 43989 / DSM 5975 / JCM 20966 / LMG 6465 / NBRC 14845 / NCIMB 13405 / ORS 571), this protein is Nucleoside diphosphate kinase.